Here is a 265-residue protein sequence, read N- to C-terminus: MKATTMSHLRQWKLEKRKFATLTAYDASFAQLFAEQGIEVLLVGDSLGMTLQGFDSTLPVTTADVAYHTRAVRRGAPHCLLLADMPFMSYATPEQTFANAAELMRAGANMVKLEGGSWLCDTVRMLAERAVPVCGHLGLTPQSVNIFGGYKVQGREEVAANQLLKDAQALENAGAQLLVLECVPVELAQRVTEALAIPVIGIGAGNVTDGQILVMHDALGITGGHTPKFSKNFLAQSAGDIRAAIKLYIQEVESGAYPAEEHTFQ.

Aspartate 45 and aspartate 84 together coordinate Mg(2+). Residues 45–46 (DS), aspartate 84, and lysine 112 each bind 3-methyl-2-oxobutanoate. Residue glutamate 114 coordinates Mg(2+). Catalysis depends on glutamate 181, which acts as the Proton acceptor.

It belongs to the PanB family. In terms of assembly, homodecamer; pentamer of dimers. Requires Mg(2+) as cofactor.

The protein resides in the cytoplasm. It carries out the reaction 3-methyl-2-oxobutanoate + (6R)-5,10-methylene-5,6,7,8-tetrahydrofolate + H2O = 2-dehydropantoate + (6S)-5,6,7,8-tetrahydrofolate. Its pathway is cofactor biosynthesis; (R)-pantothenate biosynthesis; (R)-pantoate from 3-methyl-2-oxobutanoate: step 1/2. In terms of biological role, catalyzes the reversible reaction in which hydroxymethyl group from 5,10-methylenetetrahydrofolate is transferred onto alpha-ketoisovalerate to form ketopantoate. In Yersinia enterocolitica serotype O:8 / biotype 1B (strain NCTC 13174 / 8081), this protein is 3-methyl-2-oxobutanoate hydroxymethyltransferase.